We begin with the raw amino-acid sequence, 956 residues long: Kinesin heavy chain isoform 5C (956 aa).

The Kinesin motor domain occupies Ser-8 to Ile-327. Residues Gln-87, Ser-89, Ser-90, Gly-91, Lys-92, Thr-93, His-94, and Lys-99 each coordinate ATP. The tract at residues Val-174–Lys-315 is microtubule-binding. At Thr-403 the chain carries Phosphothreonine. A coiled-coil region spans residues Val-406 to Lys-923. The segment at Cys-859–Lys-956 is globular. The interval Lys-910–Lys-956 is disordered.

Belongs to the TRAFAC class myosin-kinesin ATPase superfamily. Kinesin family. Kinesin subfamily. As to quaternary structure, oligomer composed of two heavy chains and two light chains. Interacts with GRIP1. Interacts with KLC3 and TRAK1. Interacts with ZFYVE27.

The protein localises to the cytoplasm. The protein resides in the cytoskeleton. Its subcellular location is the cell projection. It is found in the dendrite. It carries out the reaction ATP + H2O = ADP + phosphate + H(+). Functionally, microtubule-associated force-producing protein that may play a role in organelle transport. Has ATPase activity. Involved in synaptic transmission. Mediates dendritic trafficking of mRNAs. Required for anterograde axonal transportation of MAPK8IP3/JIP3 which is essential for MAPK8IP3/JIP3 function in axon elongation. This Mus musculus (Mouse) protein is Kinesin heavy chain isoform 5C (Kif5c).